A 213-amino-acid chain; its full sequence is Uridine kinase (213 aa).

15–22 (GASASGKS) is an ATP binding site.

Belongs to the uridine kinase family.

The protein localises to the cytoplasm. The catalysed reaction is uridine + ATP = UMP + ADP + H(+). The enzyme catalyses cytidine + ATP = CMP + ADP + H(+). The protein operates within pyrimidine metabolism; CTP biosynthesis via salvage pathway; CTP from cytidine: step 1/3. It functions in the pathway pyrimidine metabolism; UMP biosynthesis via salvage pathway; UMP from uridine: step 1/1. This is Uridine kinase from Salmonella paratyphi A (strain ATCC 9150 / SARB42).